The sequence spans 483 residues: Protein nucleotidyltransferase YdiU (483 aa).

Residues Gly87, Gly89, Arg90, Lys110, Asp122, Gly123, Arg173, and Arg180 each contribute to the ATP site. Residue Asp249 is the Proton acceptor of the active site. 2 residues coordinate Mg(2+): Asn250 and Asp259. Asp259 provides a ligand contact to ATP.

Belongs to the SELO family. The cofactor is Mg(2+). Mn(2+) serves as cofactor.

It carries out the reaction L-seryl-[protein] + ATP = 3-O-(5'-adenylyl)-L-seryl-[protein] + diphosphate. The enzyme catalyses L-threonyl-[protein] + ATP = 3-O-(5'-adenylyl)-L-threonyl-[protein] + diphosphate. The catalysed reaction is L-tyrosyl-[protein] + ATP = O-(5'-adenylyl)-L-tyrosyl-[protein] + diphosphate. It catalyses the reaction L-histidyl-[protein] + UTP = N(tele)-(5'-uridylyl)-L-histidyl-[protein] + diphosphate. It carries out the reaction L-seryl-[protein] + UTP = O-(5'-uridylyl)-L-seryl-[protein] + diphosphate. The enzyme catalyses L-tyrosyl-[protein] + UTP = O-(5'-uridylyl)-L-tyrosyl-[protein] + diphosphate. In terms of biological role, nucleotidyltransferase involved in the post-translational modification of proteins. It can catalyze the addition of adenosine monophosphate (AMP) or uridine monophosphate (UMP) to a protein, resulting in modifications known as AMPylation and UMPylation. In Pectobacterium atrosepticum (strain SCRI 1043 / ATCC BAA-672) (Erwinia carotovora subsp. atroseptica), this protein is Protein nucleotidyltransferase YdiU.